Here is a 1230-residue protein sequence, read N- to C-terminus: Soluble starch synthase 3, chloroplastic/amyloplastic (1230 aa).

A chloroplast-targeting transit peptide spans 1–60 (MDVPFPLHRSLSCTSVSNAITHLKIKPILGFVSHGTTSLSVQSSSWRKDGMVTGVSFSIC). The disordered stretch occupies residues 66–189 (RRRRKVSTPR…KDAVKLNKSK (124 aa)). Basic and acidic residues predominate over residues 124-145 (VEARVETSDDDTKGVVRDHKFL). Residues 152 to 170 (NGSTKSISMSPVRVSSQFV) are compositionally biased toward polar residues. Residues 177–189 (GDDKDAVKLNKSK) are compositionally biased toward basic and acidic residues. Lys794 contributes to the ADP-alpha-D-glucose binding site.

Belongs to the glycosyltransferase 1 family. Bacterial/plant glycogen synthase subfamily. Tuber, sink and source leaves.

The protein resides in the plastid. It localises to the chloroplast. It is found in the amyloplast. The catalysed reaction is [(1-&gt;4)-alpha-D-glucosyl](n) + ADP-alpha-D-glucose = [(1-&gt;4)-alpha-D-glucosyl](n+1) + ADP + H(+). It participates in glycan biosynthesis; starch biosynthesis. May account for most of the soluble starch synthase activity in the tubers. Contributes only a tiny percentage of the granule-bound activity, but may also contribute to the deposition of transient starch in chloroplasts of leaves. The chain is Soluble starch synthase 3, chloroplastic/amyloplastic (SS3) from Solanum tuberosum (Potato).